The following is a 211-amino-acid chain: Peptidyl-prolyl cis-trans isomerase FKBP14 (211 aa).

The signal sequence occupies residues 1 to 19; it reads MRFFLWNAILALWVTVLSG. Cys-38 and Cys-96 are joined by a disulfide. The PPIase FKBP-type domain occupies 45-135; it reads GDLMLVHYEG…IFNIDLLEIR (91 aa). An EF-hand 1 domain is found at 135–170; it reads RNGPRSHESFQEMDLNDDWRLSKHEVKVYLQKEFEK. Positions 148, 150, 152, 154, and 159 each coordinate Ca(2+). Asn-176 carries an N-linked (GlcNAc...) asparagine glycan. In terms of domain architecture, EF-hand 2 spans 179–211; sequence HHDALVEDIFDKEDEDKDGFISAREFTYVHDEL. 4 residues coordinate Ca(2+): Asp-192, Asp-194, Asp-196, and Glu-203. A Prevents secretion from ER motif is present at residues 208–211; it reads HDEL.

As to quaternary structure, monomer. Homodimer. Interacts with type III, type IV and type X collagens.

The protein resides in the endoplasmic reticulum lumen. It carries out the reaction [protein]-peptidylproline (omega=180) = [protein]-peptidylproline (omega=0). With respect to regulation, inhibited by tacrolimus/FK506. Functionally, PPIase which accelerates the folding of proteins during protein synthesis. Has a preference for substrates containing 4-hydroxylproline modifications, including type III collagen. May also target type VI and type X collagens. This Mus musculus (Mouse) protein is Peptidyl-prolyl cis-trans isomerase FKBP14 (Fkbp14).